Reading from the N-terminus, the 371-residue chain is Peptidyl-prolyl cis-trans isomerase CPR6 (371 aa).

The PPIase cyclophilin-type domain occupies 7-174 (FFDISIGGKP…RDVKIDDCGV (168 aa)). TPR repeat units lie at residues 219-252 (IETV…LKEY), 270-303 (VSIP…EAAD), and 308-341 (AKAL…QPND).

This sequence belongs to the cyclophilin-type PPIase family. PPIase D subfamily. As to quaternary structure, interacts with RPD3.

It is found in the cytoplasm. The catalysed reaction is [protein]-peptidylproline (omega=180) = [protein]-peptidylproline (omega=0). PPIases accelerate the folding of proteins. It catalyzes the cis-trans isomerization of proline imidic peptide bonds in oligopeptides. The protein is Peptidyl-prolyl cis-trans isomerase CPR6 (CPR6) of Saccharomyces cerevisiae (strain ATCC 204508 / S288c) (Baker's yeast).